A 918-amino-acid chain; its full sequence is Nitrate reductase [NADH] (918 aa).

Residues 25–44 form a disordered region; the sequence is KNGPNHRADSPVRGCNFPNS. Cysteine 195 lines the Mo-molybdopterin pocket. The Cytochrome b5 heme-binding domain occupies 543-618; that stretch reads SNTYTLSEVK…LEDYRIGELI (76 aa). Positions 578 and 601 each coordinate heme. The 114-residue stretch at 661–774 folds into the FAD-binding FR-type domain; the sequence is NEKIPCKLIS…KGPLGHIEYT (114 aa). Residues 714-717, 731-735, phenylalanine 736, phenylalanine 743, 748-750, and threonine 801 each bind FAD; these read RAYT, VVKVY, and IMS.

The protein belongs to the nitrate reductase family. In terms of assembly, homodimer. The cofactor is FAD. Heme is required as a cofactor. Requires Mo-molybdopterin as cofactor.

It carries out the reaction nitrite + NAD(+) + H2O = nitrate + NADH + H(+). Its function is as follows. Nitrate reductase is a key enzyme involved in the first step of nitrate assimilation in plants, fungi and bacteria. The sequence is that of Nitrate reductase [NADH] from Cucurbita maxima (Pumpkin).